The primary structure comprises 456 residues: Tyrosine phenol-lyase (456 aa).

Lys257 bears the N6-(pyridoxal phosphate)lysine mark.

This sequence belongs to the beta-eliminating lyase family. In terms of assembly, homotetramer. It depends on pyridoxal 5'-phosphate as a cofactor.

It catalyses the reaction L-tyrosine + H2O = phenol + pyruvate + NH4(+). The chain is Tyrosine phenol-lyase (tpl) from Citrobacter intermedius (Escherichia intermedia).